Here is a 97-residue protein sequence, read N- to C-terminus: Co-chaperonin GroES (97 aa).

The protein belongs to the GroES chaperonin family. In terms of assembly, heptamer of 7 subunits arranged in a ring. Interacts with the chaperonin GroEL.

The protein localises to the cytoplasm. Functionally, together with the chaperonin GroEL, plays an essential role in assisting protein folding. The GroEL-GroES system forms a nano-cage that allows encapsulation of the non-native substrate proteins and provides a physical environment optimized to promote and accelerate protein folding. GroES binds to the apical surface of the GroEL ring, thereby capping the opening of the GroEL channel. The sequence is that of Co-chaperonin GroES from Pseudomonas putida (Arthrobacter siderocapsulatus).